The primary structure comprises 238 residues: Purine nucleoside phosphorylase DeoD-type (238 aa).

Residue His-5 participates in a purine D-ribonucleoside binding. Phosphate is bound by residues Gly-21, Arg-25, Arg-44, and 88 to 91 (RVGS). A purine D-ribonucleoside is bound by residues 180-182 (EME) and 204-205 (SD). Asp-205 serves as the catalytic Proton donor.

Belongs to the PNP/UDP phosphorylase family. Homohexamer; trimer of homodimers.

The enzyme catalyses a purine D-ribonucleoside + phosphate = a purine nucleobase + alpha-D-ribose 1-phosphate. It carries out the reaction a purine 2'-deoxy-D-ribonucleoside + phosphate = a purine nucleobase + 2-deoxy-alpha-D-ribose 1-phosphate. In terms of biological role, catalyzes the reversible phosphorolytic breakdown of the N-glycosidic bond in the beta-(deoxy)ribonucleoside molecules, with the formation of the corresponding free purine bases and pentose-1-phosphate. In Proteus mirabilis (strain HI4320), this protein is Purine nucleoside phosphorylase DeoD-type.